The sequence spans 281 residues: Probable endonuclease 4 (281 aa).

Zn(2+) contacts are provided by histidine 69, histidine 109, glutamate 145, aspartate 179, histidine 182, histidine 216, aspartate 229, histidine 231, and glutamate 261.

The protein belongs to the AP endonuclease 2 family. Zn(2+) serves as cofactor.

The catalysed reaction is Endonucleolytic cleavage to 5'-phosphooligonucleotide end-products.. Endonuclease IV plays a role in DNA repair. It cleaves phosphodiester bonds at apurinic or apyrimidinic (AP) sites, generating a 3'-hydroxyl group and a 5'-terminal sugar phosphate. This is Probable endonuclease 4 from Proteus mirabilis (strain HI4320).